The chain runs to 382 residues: PPE family protein PPE44 (382 aa).

The protein belongs to the mycobacterial PPE family.

The protein resides in the secreted. It is found in the cell wall. The protein localises to the cell surface. In terms of biological role, virulence factor that modulates host innate immune response. This Mycobacterium tuberculosis (strain CDC 1551 / Oshkosh) protein is PPE family protein PPE44.